The chain runs to 322 residues: Probable cardiolipin synthase (CMP-forming) (322 aa).

Transmembrane regions (helical) follow at residues 143 to 163 (IGYV…AFAG), 199 to 219 (LVIS…IVVF), and 289 to 309 (LQGL…SYVM).

This sequence belongs to the CDP-alcohol phosphatidyltransferase class-I family.

The protein resides in the mitochondrion inner membrane. The enzyme catalyses a CDP-1,2-diacyl-sn-glycerol + a 1,2-diacyl-sn-glycero-3-phospho-(1'-sn-glycerol) = a cardiolipin + CMP + H(+). Its function is as follows. Catalyzes the synthesis of cardiolipin (CL) (diphosphatidylglycerol) by specifically transferring a phosphatidyl group from CDP-diacylglycerol to phosphatidylglycerol (PG). CL is a key phospholipid in mitochondrial membranes and plays important roles in maintaining the functional integrity and dynamics of mitochondria under both optimal and stress conditions. The protein is Probable cardiolipin synthase (CMP-forming) (CLS) of Drosophila melanogaster (Fruit fly).